We begin with the raw amino-acid sequence, 236 residues long: MTKKEMLYEGKGKKLFKTDDENLLISEFKDDLTAFNAEKRGNESGKGALNCRISTEIFHLLEKNGIKTHLVETISDTEQVVKKCKIVPIEVIVRNVATGSLTKRLGIKDGTVLPFALVEFCLKDDALGDPFINDEHCLILNLVQNEAQISEIKNMARKINSILTPFFDNKNLRLIDFKIELGLTKDNELVLADEISPDSCRFWDKFSNEKLDKDRFRQDLGNVKMAYEEVLKRILN.

The protein belongs to the SAICAR synthetase family.

It carries out the reaction 5-amino-1-(5-phospho-D-ribosyl)imidazole-4-carboxylate + L-aspartate + ATP = (2S)-2-[5-amino-1-(5-phospho-beta-D-ribosyl)imidazole-4-carboxamido]succinate + ADP + phosphate + 2 H(+). The protein operates within purine metabolism; IMP biosynthesis via de novo pathway; 5-amino-1-(5-phospho-D-ribosyl)imidazole-4-carboxamide from 5-amino-1-(5-phospho-D-ribosyl)imidazole-4-carboxylate: step 1/2. The protein is Phosphoribosylaminoimidazole-succinocarboxamide synthase of Campylobacter jejuni (strain RM1221).